The following is a 433-amino-acid chain: Serine carboxypeptidase-like 11 (433 aa).

Residues 1–21 form the signal peptide; sequence MELTLKLLVLLLFILNHHVGS. Disulfide bonds link Cys80-Cys322, Cys243-Cys257, and Cys281-Cys288. A glycan (N-linked (GlcNAc...) asparagine) is linked at Asn101. Ser176 is an active-site residue. A glycan (N-linked (GlcNAc...) asparagine) is linked at Asn342. Residue Asp358 is part of the active site. An N-linked (GlcNAc...) asparagine glycan is attached at Asn374. The active site involves His411.

The protein belongs to the peptidase S10 family. In terms of tissue distribution, ubiquitous.

The protein localises to the secreted. Its function is as follows. Probable carboxypeptidase. In Arabidopsis thaliana (Mouse-ear cress), this protein is Serine carboxypeptidase-like 11 (SCPL11).